The following is a 114-amino-acid chain: Protein lin-52 homolog (114 aa).

A phosphoserine mark is found at serine 26 and serine 51.

This sequence belongs to the lin-52 family. Component of the DREAM complex (also named LINC complex) at least composed of E2F4, E2F5, LIN9, LIN37, LIN52, LIN54, MYBL1, MYBL2, RBL1, RBL2, RBBP4, TFDP1 and TFDP2. The complex exists in quiescent cells where it represses cell cycle-dependent genes. It dissociates in S phase when LIN9, LIN37, LIN52 and LIN54 form a subcomplex that binds to MYBL2.

In Pongo abelii (Sumatran orangutan), this protein is Protein lin-52 homolog (LIN52).